The primary structure comprises 577 residues: E3 ubiquitin protein ligase RIN3 (577 aa).

6 consecutive transmembrane segments (helical) span residues 3–23 (ITYLHISVATTALSFVGLQVW), 58–78 (TTIALLASFVLNIYILLVLSL), 120–140 (GVLWTIWLTVLCTLKMFQALA), 162–182 (YSALFMVLSTDLCWIKLSLMI), 191–211 (YLLLLFEPCGIAFETLQALLI), and 272–292 (YLHIWWLHGMAFHLVDAVLFL). An RING-type; atypical zinc finger spans residues 337–379 (CAICREPMAKAKRLHCNHLFHLGCLRSWLDQGLNEVYSCPTCR). In terms of domain architecture, CUE spans 537–577 (SILAMAETVREVLPHVPDEIIFQDLQRTNSVSVTVNNLLQM).

In terms of assembly, interacts (via C-terminus) with RPM1 (via N-terminus).

The protein resides in the membrane. It carries out the reaction S-ubiquitinyl-[E2 ubiquitin-conjugating enzyme]-L-cysteine + [acceptor protein]-L-lysine = [E2 ubiquitin-conjugating enzyme]-L-cysteine + N(6)-ubiquitinyl-[acceptor protein]-L-lysine.. The protein operates within protein modification; protein ubiquitination. Its function is as follows. E3 ubiquitin protein ligase that acts as a positive regulator of RPM1- and RPS2-dependent hypersensitive response (HR), in association with RIN2. Probably not required for RPM1 degradation during HR. The chain is E3 ubiquitin protein ligase RIN3 (RIN3) from Arabidopsis thaliana (Mouse-ear cress).